The sequence spans 239 residues: 7-cyano-7-deazaguanine synthase (239 aa).

Leucine 13–alanine 23 is an ATP binding site. 4 residues coordinate Zn(2+): cysteine 193, cysteine 203, cysteine 206, and cysteine 209.

Belongs to the QueC family. The cofactor is Zn(2+).

It catalyses the reaction 7-carboxy-7-deazaguanine + NH4(+) + ATP = 7-cyano-7-deazaguanine + ADP + phosphate + H2O + H(+). Its pathway is purine metabolism; 7-cyano-7-deazaguanine biosynthesis. Catalyzes the ATP-dependent conversion of 7-carboxy-7-deazaguanine (CDG) to 7-cyano-7-deazaguanine (preQ(0)). In Erythrobacter litoralis (strain HTCC2594), this protein is 7-cyano-7-deazaguanine synthase.